The chain runs to 1248 residues: Kinesin-like protein KIN-14I (1248 aa).

The MyTH4 domain maps to 88 to 244 (FQKDPIPTSL…PAREEIEALL (157 aa)). The region spanning 249–563 (LTTIVFFLDE…HINDVMLRRY (315 aa)) is the FERM domain. Positions 586-659 (NIEIYEKRVQ…LDKLKSLCDE (74 aa)) form a coiled coil. Residues 675 to 704 (ETRLKSGQGQESSNRTGVSGNHFERDTLPT) form a disordered region. The span at 679 to 693 (KSGQGQESSNRTGVS) shows a compositional bias: polar residues. Positions 708-799 (VNNSIEMLAK…TRSLNVTEST (92 aa)) form a coiled coil. Residues 872-1193 (KIRVFCRLRP…LMYASRVRCI (322 aa)) enclose the Kinesin motor domain. 953-960 (GQTGSGKT) is an ATP binding site. Positions 1201 to 1223 (VAPKEIMRLKKLIAYWKEQAGKR) are calmodulin-binding. The disordered stretch occupies residues 1220 to 1248 (AGKRSEDDDLEEIQEERTPKEKADNRLTS). The span at 1234 to 1248 (EERTPKEKADNRLTS) shows a compositional bias: basic and acidic residues.

The protein belongs to the TRAFAC class myosin-kinesin ATPase superfamily. Kinesin family. KIN-14 subfamily. As to quaternary structure, binds microtubules via its N-terminus containing the MyTH4 domain and binds F-actin via its FERM domain. Binding to calmodulin inhibits microtubule binding activity.

It is found in the cytoplasm. It localises to the cytoskeleton. Minus-end microtubule-dependent motor protein involved in the regulation of cell division. This is Kinesin-like protein KIN-14I from Oryza sativa subsp. japonica (Rice).